A 500-amino-acid polypeptide reads, in one-letter code: Protein C13 (500 aa).

One can recognise a BTB domain in the interval 27–89 (EEIVFIMTVG…IETGIVTIDL (63 aa)). 4 Kelch repeats span residues 301-348 (ILYL…IFKN), 349-395 (RIYV…GTDN), 397-440 (LYVV…YHHG), and 441-490 (YIYM…IIED).

Belongs to the poxviruses Kelch family.

The sequence is that of Protein C13 from Swinepox virus (strain Kasza) (SWPV).